A 646-amino-acid polypeptide reads, in one-letter code: Peptidylprolyl isomerase domain and WD repeat-containing protein 1 (646 aa).

The segment at 1–50 is disordered; the sequence is MATESGSDSQLRRRRRRDPEGSEKTELSEREPALAVAGSEENDDENEERW. A2 carries the post-translational modification N-acetylalanine. The span at 17–32 shows a compositional bias: basic and acidic residues; sequence RDPEGSEKTELSEREP. WD repeat units follow at residues 88-126, 131-170, 221-260, and 278-319; these read MHRD…IEFV, SHLG…MINM, LHVS…YKFP, and KCKA…RVFD. One can recognise a PPIase cyclophilin-type domain in the interval 490-645; sequence VSDSAIVHTS…EDVSIINITV (156 aa).

Belongs to the cyclophilin-type PPIase family. PPIL1 subfamily. As to quaternary structure, identified in the spliceosome C complex.

The protein resides in the nucleus. The catalysed reaction is [protein]-peptidylproline (omega=180) = [protein]-peptidylproline (omega=0). Its activity is regulated as follows. Inhibited by cyclosporin A (CsA). Its function is as follows. PPIase that catalyzes the cis-trans isomerization of proline imidic peptide bonds in oligopeptides and may therefore assist protein folding. May be involved in pre-mRNA splicing. This is Peptidylprolyl isomerase domain and WD repeat-containing protein 1 from Mus musculus (Mouse).